Reading from the N-terminus, the 156-residue chain is MSRRIRAQKRPVPPDPVYNSRLISMTIRRLMASGKKSLASRILYDALKIIEERTNQDPLEVFETAVRNVTPLVEVKARRVGGATYQVPMEVRSDRGIALALRWIIRFSRQRPGRSMVSKLANELIDAANETGAAIRKREETHRMAEANKAFAHYRY.

The protein belongs to the universal ribosomal protein uS7 family. In terms of assembly, part of the 30S ribosomal subunit. Contacts proteins S9 and S11.

Its function is as follows. One of the primary rRNA binding proteins, it binds directly to 16S rRNA where it nucleates assembly of the head domain of the 30S subunit. Is located at the subunit interface close to the decoding center, probably blocks exit of the E-site tRNA. This chain is Small ribosomal subunit protein uS7, found in Acaryochloris marina (strain MBIC 11017).